We begin with the raw amino-acid sequence, 285 residues long: Bis(5'-nucleosyl)-tetraphosphatase, symmetrical (285 aa).

The protein belongs to the Ap4A hydrolase family.

The enzyme catalyses P(1),P(4)-bis(5'-adenosyl) tetraphosphate + H2O = 2 ADP + 2 H(+). Hydrolyzes diadenosine 5',5'''-P1,P4-tetraphosphate to yield ADP. This Pseudomonas entomophila (strain L48) protein is Bis(5'-nucleosyl)-tetraphosphatase, symmetrical.